The following is a 280-amino-acid chain: MKALVEEIDKKTYNPDIYFTSLDPQARRYTSKKINKQGTISTSRPVKRINYSLADLEARLYTSRSEGDGNSISRQDDRNSKNSHSFEERYTQQEILQSDRRFMELNTENFSDLPNVPTLLSDLTGVPRDRIESTTKPISQTSDGLSALMGGSSFVKEHSKYGHGWVLKPETLREIQLSYKSTKLPKPKRKNTNRIVALKKVLSSKRNLHSFLDSALLNLMDKNVIYHNVYNKRYFKVLPLITTCSICGGYDSISSCVNCGNKICSVSCFKLHNETRCRNR.

Positions 64-73 (RSEGDGNSIS) are enriched in polar residues. The interval 64–92 (RSEGDGNSISRQDDRNSKNSHSFEERYTQ) is disordered. Residues 74 to 92 (RQDDRNSKNSHSFEERYTQ) are compositionally biased toward basic and acidic residues. Zn(2+) contacts are provided by Cys244, Cys247, Cys256, Cys259, Cys264, Cys268, His272, and Cys277. The HIT-type zinc finger occupies 244–277 (CSICGGYDSISSCVNCGNKICSVSCFKLHNETRC).

As to quaternary structure, belongs to the SWR1 complex at least composed of ACT1, ARP4, RVB1, RVB2, ARP6, YAF9, VPS71, VPS72, SWC3, SWC4, SWC5, SWR1 and HTZ1.

The protein resides in the nucleus. In terms of biological role, participates in the catalytic exchange of histone H2A for the H2A variant HZT1, an euchromatin-specific factor, leading to chromatin remodeling and changes in transcription of targeted genes. Indirectly involved in vacuolar protein sorting. This chain is Vacuolar protein sorting-associated protein 71 (VPS71), found in Saccharomyces cerevisiae (strain ATCC 204508 / S288c) (Baker's yeast).